The chain runs to 260 residues: Proteasome subunit alpha (260 aa).

The protein belongs to the peptidase T1A family. The 20S proteasome core is composed of 14 alpha and 14 beta subunits that assemble into four stacked heptameric rings, resulting in a barrel-shaped structure. The two inner rings, each composed of seven catalytic beta subunits, are sandwiched by two outer rings, each composed of seven alpha subunits. The catalytic chamber with the active sites is on the inside of the barrel. Has a gated structure, the ends of the cylinder being occluded by the N-termini of the alpha-subunits. Is capped at one or both ends by the proteasome regulatory ATPase, PAN.

Its subcellular location is the cytoplasm. Its activity is regulated as follows. The formation of the proteasomal ATPase PAN-20S proteasome complex, via the docking of the C-termini of PAN into the intersubunit pockets in the alpha-rings, triggers opening of the gate for substrate entry. Interconversion between the open-gate and close-gate conformations leads to a dynamic regulation of the 20S proteasome proteolysis activity. In terms of biological role, component of the proteasome core, a large protease complex with broad specificity involved in protein degradation. The polypeptide is Proteasome subunit alpha (Pyrococcus abyssi (strain GE5 / Orsay)).